The sequence spans 60 residues: Large ribosomal subunit protein bL32 (60 aa).

Residues 1-60 (MAVQQVKKSRSKRDMRRSHDSLTGPTLSTDKSTGELHLRHHVSPNGFYKGKKVVDTKSED) are disordered. A compositionally biased stretch (basic residues) spans 7–16 (KKSRSKRDMR).

This sequence belongs to the bacterial ribosomal protein bL32 family.

This Francisella philomiragia subsp. philomiragia (strain ATCC 25017 / CCUG 19701 / FSC 153 / O#319-036) protein is Large ribosomal subunit protein bL32.